A 227-amino-acid chain; its full sequence is Flagellar L-ring protein 2 (227 aa).

Positions 1 to 17 (MKSKLAITMVSALLLAA) are cleaved as a signal peptide. Cys18 carries N-palmitoyl cysteine lipidation. A lipid anchor (S-diacylglycerol cysteine) is attached at Cys18.

It belongs to the FlgH family. As to quaternary structure, the basal body constitutes a major portion of the flagellar organelle and consists of four rings (L,P,S, and M) mounted on a central rod.

It is found in the cell outer membrane. The protein resides in the bacterial flagellum basal body. Functionally, assembles around the rod to form the L-ring and probably protects the motor/basal body from shearing forces during rotation. In Chromobacterium violaceum (strain ATCC 12472 / DSM 30191 / JCM 1249 / CCUG 213 / NBRC 12614 / NCIMB 9131 / NCTC 9757 / MK), this protein is Flagellar L-ring protein 2.